Here is a 487-residue protein sequence, read N- to C-terminus: Adenosylhomocysteinase (487 aa).

Residues Thr76, Asp151, and Glu212 each coordinate substrate. An NAD(+)-binding site is contributed by 213–215 (TTT). Positions 242 and 246 each coordinate substrate. Residues Asn247, 276–281 (GYGDVG), Glu299, Asn334, 355–357 (IGH), and Asn403 contribute to the NAD(+) site.

It belongs to the adenosylhomocysteinase family. NAD(+) serves as cofactor.

The protein localises to the cytoplasm. It catalyses the reaction S-adenosyl-L-homocysteine + H2O = L-homocysteine + adenosine. Its pathway is amino-acid biosynthesis; L-homocysteine biosynthesis; L-homocysteine from S-adenosyl-L-homocysteine: step 1/1. Its function is as follows. May play a key role in the regulation of the intracellular concentration of adenosylhomocysteine. In Bacteroides fragilis (strain YCH46), this protein is Adenosylhomocysteinase.